Here is a 268-residue protein sequence, read N- to C-terminus: Lipase 1 (268 aa).

The N-terminal stretch at 1–29 (MRRFRLVGFLSSLVLAAGAALTGAATAQA) is a signal peptide. Ser44 serves as the catalytic Nucleophile. 3 cysteine pairs are disulfide-bonded: Cys61/Cys86, Cys127/Cys135, and Cys185/Cys231. His250 is an active-site residue.

This sequence belongs to the 'GDSL' lipolytic enzyme family. As to quaternary structure, monomer.

It localises to the secreted. It carries out the reaction a triacylglycerol + H2O = a diacylglycerol + a fatty acid + H(+). With respect to regulation, strongly inhibited by Ag(+). The cations Ca(2+), Mg(2+), Co(2+) and Cu(2+) do not significantly reduce the lipolytic activity of SCO1725. Is also inhibited by DTT in vitro, but not by EDTA or by the reagent masking SH-groups, p-hydroxymercuribenzoate (pHMB). Is resistant to PMSF inhibition, except in the presence of Ca(2+). Is also strongly inhibited by 3,4-dichloroisocoumarin (DCI), another inhibitor of serine hydrolases. Addition of tetrahydrofuran and 1,4-dioxane significantly increases (2- and 4- fold, respectively) hydrolytic activity of lipase towards p-nitrophenyl caprylate. In terms of biological role, catalyzes the hydrolysis of fatty acid esters with a preference for mid-length acyl chain (C10-C16). Is able to hydrolyze the triacylglycerol triolein and mixed triacylglycerols from a wide range of natural oils; better activity is obtained with corn-, wheat germ- and olive oil that have higher content of linoleic and/or oleic acid (C18:2; C18:1, cis). Tween detergents are also substrates for this enzyme. Displays arylesterase activity towards p-nitrophenyl alkanoate esters and alpha- and beta-naphthyl esters. In Streptomyces coelicolor (strain ATCC BAA-471 / A3(2) / M145), this protein is Lipase 1.